Here is a 47-residue protein sequence, read N- to C-terminus: PhoP/PhoQ regulator MgrB (47 aa).

A helical transmembrane segment spans residues 6-26 (WVVLGIVVVVCLLLWAQVFNI).

This sequence belongs to the MgrB family. May form homooligomers. Probably interacts with the periplasmic domain of PhoQ.

It is found in the cell inner membrane. Functionally, phoP-regulated transcription is redox-sensitive, being activated when the periplasm becomes more reducing. MgrB acts between DsbA/DsbB and PhoP/PhoQ in this pathway. Represses PhoP/PhoQ signaling, possibly by binding to the periplasmic domain of PhoQ, altering its activity and that of downstream effector PhoP. This is PhoP/PhoQ regulator MgrB from Salmonella gallinarum (strain 287/91 / NCTC 13346).